Reading from the N-terminus, the 303-residue chain is MSSVLERPAAPAILPSRQDGEGSVQVKMDPNLKIGTARVFSVYGKGGIGKSTTSSNLSVAFSKLGKRVLQIGCDPKHDSTFTLTKKLVPTVIDVLESVNFHSEELRPEDFVYPGYNGVMCVEAGGPPAGTGCGGYVVGQTVKLLKEHHLLEDTDVVIFDVLGDVVCGGFAAPLQHAQRALIVAANDFDSIFAMNRIVAAIQAKSKNYEVRLGGVICNRSAATDQIDKFNAAVGLNTLAHLPDLDGIRRSRLKKCTVFEMEDEPELERARQEYLRLAATLLAGTEPLAPAPLRDRDIFDLLGFD.

The segment at 1-24 is disordered; sequence MSSVLERPAAPAILPSRQDGEGSV. ATP contacts are provided by residues 47–52 and K76; that span reads GIGKST. S51 serves as a coordination point for Mg(2+). C132 and C166 together coordinate [4Fe-4S] cluster. Residues 217–218 and 241–243 contribute to the ATP site; these read NR and PDL.

It belongs to the NifH/BchL/ChlL family. Homodimer. Protochlorophyllide reductase is composed of three subunits; BchL, BchN and BchB. The cofactor is [4Fe-4S] cluster.

It catalyses the reaction chlorophyllide a + oxidized 2[4Fe-4S]-[ferredoxin] + 2 ADP + 2 phosphate = protochlorophyllide a + reduced 2[4Fe-4S]-[ferredoxin] + 2 ATP + 2 H2O. It functions in the pathway porphyrin-containing compound metabolism; bacteriochlorophyll biosynthesis (light-independent). Component of the dark-operative protochlorophyllide reductase (DPOR) that uses Mg-ATP and reduced ferredoxin to reduce ring D of protochlorophyllide (Pchlide) to form chlorophyllide a (Chlide). This reaction is light-independent. The L component serves as a unique electron donor to the NB-component of the complex, and binds Mg-ATP. The polypeptide is Light-independent protochlorophyllide reductase iron-sulfur ATP-binding protein (Rhodospirillum centenum (strain ATCC 51521 / SW)).